We begin with the raw amino-acid sequence, 104 residues long: Small ribosomal subunit protein uS10 (104 aa).

The protein belongs to the universal ribosomal protein uS10 family. As to quaternary structure, part of the 30S ribosomal subunit.

Its function is as follows. Involved in the binding of tRNA to the ribosomes. This chain is Small ribosomal subunit protein uS10, found in Buchnera aphidicola subsp. Baizongia pistaciae (strain Bp).